The primary structure comprises 155 residues: Vasotocin-neurophysin VT 2 (155 aa).

An N-terminal signal peptide occupies residues 1-20; sequence MSVCAVLLLCVAGLLCLSSA. A disulfide bridge links Cys-21 with Cys-26. Gly-29 is modified (glycine amide). Intrachain disulfides connect Cys-42/Cys-86, Cys-45/Cys-59, Cys-53/Cys-76, Cys-60/Cys-66, Cys-93/Cys-106, Cys-100/Cys-118, and Cys-107/Cys-112. Residues 119-128 show a composition bias toward acidic residues; that stretch reads SEDSESEEPA. Residues 119–139 form a disordered region; that stretch reads SEDSESEEPADQNTLGASPGE.

Belongs to the vasopressin/oxytocin family.

It is found in the secreted. Vasotocin is an antidiuretic hormone. The sequence is that of Vasotocin-neurophysin VT 2 from Catostomus commersonii (White sucker).